The chain runs to 506 residues: MTPVVALVGRPNVGKSTLFNRLTRTRDALVADFPGLTRDRKYGHANIAGYNFIVIDTGGIDGTEEGVEEKMAEQSLLAIEEADVVLFLVDARAGLVPADIGIAQYLRQREKTTVVVANKTDGIDADSHCAEFYQLGLGEVEQIAAAQGRGVTQLIDQVLAPLGEQLNADQAVENEENSANEEADEWDTDFDFENEDDTALLDEALEEETEESIEDKNIKIAIVGRPNVGKSTLTNRILGEERVVVYDMPGTTRDSIYIPMERDGQQYTIIDTAGVRKRGKVNLAVEKFSVIKTLQAIQDANVVLLTIDAREGISDQDLSLLGFILNAGRSLVIVVNKWDGLSQDIKDQVKSELDRRLDFIDFARVHFISALHGSGVGNLFDSVKEAYACATQKTSTSMLTRILRMAADEHQPPLVNGRRVKLKYAHPGGYNPPIIVIHGNQVEKLADSYKRYLSNYFRKSLKIIGSPIRIQFQEGNNPFAGKKNKLTPSQLRKRKRLMKFIKKSKK.

EngA-type G domains lie at 3–166 (PVVA…GEQL) and 218–391 (IKIA…ACAT). Residues 9 to 16 (GRPNVGKS), 56 to 60 (DTGGI), 118 to 121 (NKTD), 224 to 231 (GRPNVGKS), 271 to 275 (DTAGV), and 336 to 339 (NKWD) each bind GTP. The KH-like domain occupies 392 to 476 (QKTSTSMLTR…PIRIQFQEGN (85 aa)).

This sequence belongs to the TRAFAC class TrmE-Era-EngA-EngB-Septin-like GTPase superfamily. EngA (Der) GTPase family. As to quaternary structure, associates with the 50S ribosomal subunit.

In terms of biological role, GTPase that plays an essential role in the late steps of ribosome biogenesis. The chain is GTPase Der from Actinobacillus pleuropneumoniae serotype 3 (strain JL03).